Consider the following 427-residue polypeptide: Enolase (427 aa).

Glutamine 163 is a (2R)-2-phosphoglycerate binding site. Glutamate 205 functions as the Proton donor in the catalytic mechanism. Residues aspartate 242, glutamate 285, and aspartate 312 each contribute to the Mg(2+) site. (2R)-2-phosphoglycerate-binding residues include lysine 337, arginine 366, serine 367, and lysine 388. Catalysis depends on lysine 337, which acts as the Proton acceptor.

Belongs to the enolase family. Mg(2+) is required as a cofactor.

Its subcellular location is the cytoplasm. It is found in the secreted. It localises to the cell surface. The catalysed reaction is (2R)-2-phosphoglycerate = phosphoenolpyruvate + H2O. It participates in carbohydrate degradation; glycolysis; pyruvate from D-glyceraldehyde 3-phosphate: step 4/5. Functionally, catalyzes the reversible conversion of 2-phosphoglycerate (2-PG) into phosphoenolpyruvate (PEP). It is essential for the degradation of carbohydrates via glycolysis. The sequence is that of Enolase from Rhodopseudomonas palustris (strain TIE-1).